Here is an 838-residue protein sequence, read N- to C-terminus: Envelope glycoprotein H (838 aa).

The N-terminal stretch at 1–18 is a signal peptide; sequence MGNGLWFVGVIILGVAWG. Residues 19–803 lie on the Virion surface side of the membrane; the sequence is QVHDWTEQTD…DTQPVAAIAP (785 aa). Residues N73 and N120 are each glycosylated (N-linked (GlcNAc...) asparagine; by host). A disordered region spans residues 174–204; sequence FPRGDNVATASHPSGPRDTPPPRPPVGARRH. The N-linked (GlcNAc...) asparagine; by host glycan is linked to N216. An interaction with gL region spans residues 259–323; sequence DAALVRARYG…PGGPRYRVFV (65 aa). N-linked (GlcNAc...) asparagine; by host glycosylation is found at N332, N437, N670, and N784. The chain crosses the membrane as a helical span at residues 804–824; the sequence is GFLAASALGVVMITAALAGIL. Residues 825-838 lie on the Intravirion side of the membrane; sequence KVLRTSVPFFWRRE.

It belongs to the herpesviridae glycoprotein H family. As to quaternary structure, interacts with glycoprotein L (gL); this interaction is necessary for the correct processing and cell surface expression of gH. The heterodimer gH/gL seems to interact with gB trimers during fusion. Associates with the gB-gH/gL-gD complex. Interacts with VP16. Post-translationally, N-glycosylated, O-glycosylated, and sialylated.

The protein localises to the virion membrane. It is found in the host cell membrane. Its subcellular location is the host endosome membrane. In terms of biological role, the heterodimer glycoprotein H-glycoprotein L is required for the fusion of viral and plasma membranes leading to virus entry into the host cell. Following initial binding to host receptor, membrane fusion is mediated by the fusion machinery composed of gB and the heterodimer gH/gL. May also be involved in the fusion between the virion envelope and the outer nuclear membrane during virion morphogenesis. The chain is Envelope glycoprotein H from Human herpesvirus 1 (strain 17) (HHV-1).